The primary structure comprises 249 residues: MADYNVSMRDLLQAGAHFGHQTRFWNPKMRQYIFGARNKIHIINLEHTVPALNDALNFANQLASKKNKVLFVGTKRAASNIIREQAQRAGQPYVDHRWLGGMLTNWKTLRQSINRLKDLQTQSQDGTFAKLTKREALERTREMEKLERSLGGVKNMGGLPDALFVIDVDHEAIAIKEAKNLGIPVIGIVDTNSNPDNVDYVIPGNDDAIRAVTLYASAMADAILAGKEYAQSQANAQAKGEEAPAASEA.

It belongs to the universal ribosomal protein uS2 family.

The protein is Small ribosomal subunit protein uS2 of Acinetobacter baylyi (strain ATCC 33305 / BD413 / ADP1).